A 339-amino-acid chain; its full sequence is Thymidine kinase (339 aa).

11 to 18 is a binding site for ATP; that stretch reads GAFGIGKT. E39 functions as the Proton acceptor in the catalytic mechanism. Y59 and Q83 together coordinate substrate. R176 serves as a coordination point for ATP. Position 182 (R182) interacts with substrate.

This sequence belongs to the herpesviridae thymidine kinase family. As to quaternary structure, homodimer.

The catalysed reaction is thymidine + ATP = dTMP + ADP + H(+). Its function is as follows. Catalyzes the transfer of the gamma-phospho group of ATP to thymidine to generate dTMP in the salvage pathway of pyrimidine synthesis. The dTMP serves as a substrate for DNA polymerase during viral DNA replication. Allows the virus to be reactivated and to grow in non-proliferative cells lacking a high concentration of phosphorylated nucleic acid precursors. This is Thymidine kinase from Amazona oratrix (yellow-headed parrot).